The sequence spans 116 residues: Large ribosomal subunit protein bL19 (116 aa).

This sequence belongs to the bacterial ribosomal protein bL19 family.

Functionally, this protein is located at the 30S-50S ribosomal subunit interface and may play a role in the structure and function of the aminoacyl-tRNA binding site. The sequence is that of Large ribosomal subunit protein bL19 from Geobacillus sp. (strain WCH70).